The chain runs to 213 residues: U1 small nuclear ribonucleoprotein C (213 aa).

Residues 4–36 form a Matrin-type zinc finger; the sequence is YYCDYCDTYLTHDSPSVRKQHNAGYKHKANVRS. Positions 143–166 are enriched in pro residues; it reads APSMPMPPLNSLPRPPTMNVPPAV. Positions 143–213 are disordered; sequence APSMPMPPLN…INAQGPEANH (71 aa). Low complexity predominate over residues 167-180; sequence PGSTSTPTSGGAPS.

The protein belongs to the U1 small nuclear ribonucleoprotein C family. In terms of assembly, U1 snRNP is composed of the 7 core Sm proteins B/B', D1, D2, D3, E, F and G that assemble in a heptameric protein ring on the Sm site of the small nuclear RNA to form the core snRNP, and at least 3 U1 snRNP-specific proteins U1-70K, U1-A and U1-C. U1-C interacts with U1 snRNA and the 5' splice-site region of the pre-mRNA.

The protein resides in the nucleus. Its function is as follows. Component of the spliceosomal U1 snRNP, which is essential for recognition of the pre-mRNA 5' splice-site and the subsequent assembly of the spliceosome. U1-C is directly involved in initial 5' splice-site recognition for both constitutive and regulated alternative splicing. The interaction with the 5' splice-site seems to precede base-pairing between the pre-mRNA and the U1 snRNA. Stimulates commitment or early (E) complex formation by stabilizing the base pairing of the 5' end of the U1 snRNA and the 5' splice-site region. The polypeptide is U1 small nuclear ribonucleoprotein C (Vitis vinifera (Grape)).